The chain runs to 123 residues: Large ribosomal subunit protein bL12 (123 aa).

This sequence belongs to the bacterial ribosomal protein bL12 family. In terms of assembly, homodimer. Part of the ribosomal stalk of the 50S ribosomal subunit. Forms a multimeric L10(L12)X complex, where L10 forms an elongated spine to which 2 to 4 L12 dimers bind in a sequential fashion. Binds GTP-bound translation factors.

Its function is as follows. Forms part of the ribosomal stalk which helps the ribosome interact with GTP-bound translation factors. Is thus essential for accurate translation. In Neisseria perflava, this protein is Large ribosomal subunit protein bL12.